Here is a 343-residue protein sequence, read N- to C-terminus: tRNA-specific 2-thiouridylase MnmA 2 (343 aa).

ATP is bound by residues 7 to 14 and L33; that span reads GMSGGVDS. C91 (nucleophile) is an active-site residue. Residues C91 and C189 are joined by a disulfide bond. G115 lines the ATP pocket. Residues 139-141 form an interaction with tRNA region; that stretch reads KDQ. The active-site Cysteine persulfide intermediate is the C189.

It belongs to the MnmA/TRMU family.

Its subcellular location is the cytoplasm. The enzyme catalyses S-sulfanyl-L-cysteinyl-[protein] + uridine(34) in tRNA + AH2 + ATP = 2-thiouridine(34) in tRNA + L-cysteinyl-[protein] + A + AMP + diphosphate + H(+). Functionally, catalyzes the 2-thiolation of uridine at the wobble position (U34) of tRNA, leading to the formation of s(2)U34. The polypeptide is tRNA-specific 2-thiouridylase MnmA 2 (Fusobacterium nucleatum subsp. nucleatum (strain ATCC 25586 / DSM 15643 / BCRC 10681 / CIP 101130 / JCM 8532 / KCTC 2640 / LMG 13131 / VPI 4355)).